We begin with the raw amino-acid sequence, 238 residues long: MLKFTAISFVLLNAAESVDHQKPIRALDSQPLLKFTRTPNDSNVTFGEKFVLSCGANGAPLPSIYWELNGMRIQGEETSNVYENILNDGKQVSNAAMVSSHYRIPCATARNSGAYKCIIDNGLTKLEHVAKVFVGGNKTNCALNDNGAPFISMTVDFRLEISNNAVALSCRSETATEWSWHKGEQLLTNDGERYQMFPSGDLIIRNISWSDMGEYNCTARNHFGETTAITFLYPTLAK.

A signal peptide spans 1–17; the sequence is MLKFTAISFVLLNAAES. The 100-residue stretch at 31–130 folds into the Ig-like C2-type 1 domain; sequence PLLKFTRTPN…NGLTKLEHVA (100 aa). 2 N-linked (GlcNAc...) asparagine glycosylation sites follow: Asn40 and Asn43. Cysteines 54 and 117 form a disulfide. 3 N-linked (GlcNAc...) asparagine glycosylation sites follow: Asn137, Asn206, and Asn216. Positions 149–230 constitute an Ig-like C2-type 2 domain; it reads PFISMTVDFR…NHFGETTAIT (82 aa). An intrachain disulfide couples Cys170 to Cys217.

In terms of tissue distribution, expressed in PVT neurons and weakly in some head neurons.

It localises to the secreted. In terms of biological role, probably not involved in maintaining the position of ASI and ASH head neuron cell bodies and ventral nerve cord axons of PVQ, PVP, RMEV, AVK and HSN neurons. The sequence is that of Zwei Ig domain protein zig-2 from Caenorhabditis elegans.